Consider the following 153-residue polypeptide: Cytochrome c-type biogenesis protein CcmE (153 aa).

Residues 1–7 (MTRKKRR) lie on the Cytoplasmic side of the membrane. Residues 8–28 (LYFVVLGMLALFAAAGLTLTA) form a helical; Signal-anchor for type II membrane protein membrane-spanning segment. Topologically, residues 29–153 (FQDNLVFFYS…PPTAAAAPAP (125 aa)) are periplasmic. Residues His-121 and Tyr-125 each coordinate heme. The disordered stretch occupies residues 132–153 (ESLKASGKWQHGPPTAAAAPAP). Residues 144–153 (PPTAAAAPAP) are compositionally biased toward low complexity.

It belongs to the CcmE/CycJ family.

It localises to the cell inner membrane. Functionally, heme chaperone required for the biogenesis of c-type cytochromes. Transiently binds heme delivered by CcmC and transfers the heme to apo-cytochromes in a process facilitated by CcmF and CcmH. The protein is Cytochrome c-type biogenesis protein CcmE of Rhodospirillum rubrum (strain ATCC 11170 / ATH 1.1.1 / DSM 467 / LMG 4362 / NCIMB 8255 / S1).